The primary structure comprises 498 residues: Glycerol kinase (498 aa).

T11 contacts ADP. Residues T11, S12, and S13 each coordinate ATP. Residue T11 coordinates sn-glycerol 3-phosphate. R15 provides a ligand contact to ADP. The sn-glycerol 3-phosphate site is built by R81, E82, Y133, and D242. R81, E82, Y133, D242, and Q243 together coordinate glycerol. ADP-binding residues include T264 and G307. ATP is bound by residues T264, G307, Q311, and G412. Residues G412 and N416 each coordinate ADP.

Belongs to the FGGY kinase family.

The catalysed reaction is glycerol + ATP = sn-glycerol 3-phosphate + ADP + H(+). It functions in the pathway polyol metabolism; glycerol degradation via glycerol kinase pathway; sn-glycerol 3-phosphate from glycerol: step 1/1. Its activity is regulated as follows. Inhibited by fructose 1,6-bisphosphate (FBP). Its function is as follows. Key enzyme in the regulation of glycerol uptake and metabolism. Catalyzes the phosphorylation of glycerol to yield sn-glycerol 3-phosphate. The polypeptide is Glycerol kinase (Acidovorax ebreus (strain TPSY) (Diaphorobacter sp. (strain TPSY))).